A 350-amino-acid chain; its full sequence is Small ribosomal subunit biogenesis GTPase RsgA (350 aa).

The tract at residues 1–30 is disordered; sequence MSKRKLTQNQQRRIQSNNAKTLHRHQHRHK. A compositionally biased stretch (polar residues) spans 7 to 20; the sequence is TQNQQRRIQSNNAK. Positions 21 to 30 are enriched in basic residues; that stretch reads TLHRHQHRHK. The region spanning 106 to 274 is the CP-type G domain; that stretch reads HNQIVRPDYY…LIDSPGIREF (169 aa). GTP contacts are provided by residues 162 to 165 and 216 to 224; these read NKAD and GQSGVGKSS. The Zn(2+) site is built by Cys298, Cys303, His305, and Cys311.

This sequence belongs to the TRAFAC class YlqF/YawG GTPase family. RsgA subfamily. In terms of assembly, monomer. Associates with 30S ribosomal subunit, binds 16S rRNA. It depends on Zn(2+) as a cofactor.

It is found in the cytoplasm. Its function is as follows. One of several proteins that assist in the late maturation steps of the functional core of the 30S ribosomal subunit. Helps release RbfA from mature subunits. May play a role in the assembly of ribosomal proteins into the subunit. Circularly permuted GTPase that catalyzes slow GTP hydrolysis, GTPase activity is stimulated by the 30S ribosomal subunit. The protein is Small ribosomal subunit biogenesis GTPase RsgA of Histophilus somni (strain 2336) (Haemophilus somnus).